The primary structure comprises 668 residues: UvrABC system protein B (668 aa).

In terms of domain architecture, Helicase ATP-binding spans 31–416 (QGITDGVPAQ…RGHIIEQIIR (386 aa)). An ATP-binding site is contributed by 44–51 (GTTGSGKT). The Beta-hairpin signature appears at 97-120 (YYDYYQPEAYIARSDTYIEKSLLI). Residues 433 to 596 (QIDDLLEEIR…ITPQPIIKPI (164 aa)) form the Helicase C-terminal domain. One can recognise a UVR domain in the interval 621–656 (EASIKTYEEAMYQAAQEFQFDEAAKYRDLMNAAKKQ).

Belongs to the UvrB family. In terms of assembly, forms a heterotetramer with UvrA during the search for lesions. Interacts with UvrC in an incision complex.

Its subcellular location is the cytoplasm. Its function is as follows. The UvrABC repair system catalyzes the recognition and processing of DNA lesions. A damage recognition complex composed of 2 UvrA and 2 UvrB subunits scans DNA for abnormalities. Upon binding of the UvrA(2)B(2) complex to a putative damaged site, the DNA wraps around one UvrB monomer. DNA wrap is dependent on ATP binding by UvrB and probably causes local melting of the DNA helix, facilitating insertion of UvrB beta-hairpin between the DNA strands. Then UvrB probes one DNA strand for the presence of a lesion. If a lesion is found the UvrA subunits dissociate and the UvrB-DNA preincision complex is formed. This complex is subsequently bound by UvrC and the second UvrB is released. If no lesion is found, the DNA wraps around the other UvrB subunit that will check the other stand for damage. The chain is UvrABC system protein B from Chlamydia trachomatis serovar D (strain ATCC VR-885 / DSM 19411 / UW-3/Cx).